A 598-amino-acid chain; its full sequence is Nuclear receptor subfamily 4immunitygroup A member 1 (598 aa).

Disordered stretches follow at residues 1-44 (MPCI…EAAP), 131-158 (YYGS…DGSF), 177-206 (LPKA…AQSP), and 221-265 (GESY…GSEG). Residues 134–145 (SPCSAPSPSTPS) are compositionally biased toward low complexity. The segment at 171-466 (RAWTEQLPKA…PGEGKLIFCS (296 aa)) is required for nuclear import. The nuclear receptor DNA-binding region spans 264 to 339 (EGRCAVCGDN…VGMVKEVVRT (76 aa)). 2 consecutive NR C4-type zinc fingers follow at residues 267 to 287 (CAVC…CEGC) and 303 to 327 (CLAN…FQKC). The segment at 268–354 (AVCGDNASCQ…RRGRLPSKPK (87 aa)) is required for binding NBRE-containing DNA. The interval 299-361 (AKYICLANKD…KPKQPPDASP (63 aa)) is required for the interaction with RXRA. Ser341 is subject to Phosphoserine; by PKA. A disordered region spans residues 341 to 361 (SLKGRRGRLPSKPKQPPDASP). Ser351 is subject to Phosphoserine. Residues 360–595 (SPANLLTSLV…PIIDKIFMDT (236 aa)) form the NR LBD domain. A binds lipopolysaccharide region spans residues 521-544 (PRRVEELQNRIASCLKEHVAAVAG). An AF-2 region spans residues 584-595 (PPPIIDKIFMDT).

Belongs to the nuclear hormone receptor family. NR4 subfamily. As to quaternary structure, binds the NGFI-B response element (NBRE) as a monomer. Binds the Nur response element (NurRE), consisting of two inverse NBRE-related octanucleotide repeats separated by 6 base-pairs, as a dimer. Interacts (via N-terminus) with NLRP3 (via LRR repeat domain); the interaction is direct, requires binding of NR4A1/Nur77 to NBRE-containing dsDNA and lipopolysaccharide, and leads to non-canonical NLRP3 inflammasome activation. Interacts with GADD45GIP1. Interacts with STK11. Interacts with IFI27. Heterodimer (via DNA-binding domain) with RXRA (via C-terminus); DNA-binding of the heterodimer is enhanced by 9-cis retinoic acid. Competes for the RXRA interaction with EP300 and thereby attenuates EP300 mediated acetylation of RXRA. Interacts with NCOA1. Interacts with NCOA2. Interacts with NCOA3. The cofactor is Zn(2+). Post-translationally, phosphorylated at Ser-351 by RPS6KA1 and RPS6KA3 in response to mitogenic or stress stimuli. In terms of processing, acetylated by p300/CBP, acetylation increases stability. Deacetylated by HDAC1. In terms of tissue distribution, fetal muscle and adult liver, brain and thyroid.

It localises to the nucleus. It is found in the cytoplasm. Its subcellular location is the cytosol. The protein resides in the mitochondrion. Its activity is regulated as follows. Its transcription factor activity is activated by binding cytosporone B (Csn-B) via its ligand-binding (NR LBD) domain and stimulates recruitment of coactivators NCOA1 and NCOA2, but not NCOA3, to promoters. Csn-B-binding is also accompanied by its translocation to the mitochondrion. Its transcription factor activity is activated by corticotropin-releasing hormone (CRH) and forskolin. Not activated by binding cytosporone C (Csn-C). In terms of biological role, orphan nuclear receptor. Binds the NGFI-B response element (NBRE) 5'-AAAGGTCA-3'. Binds 9-cis-retinoic acid outside of its ligand-binding (NR LBD) domain. Participates in energy homeostasis by sequestrating the kinase STK11 in the nucleus, thereby attenuating cytoplasmic AMPK activation. Regulates the inflammatory response in macrophages by regulating metabolic adaptations during inflammation, including repressing the transcription of genes involved in the citric acid cycle (TCA). Inhibits NF-kappa-B signaling by binding to low-affinity NF-kappa-B binding sites, such as at the IL2 promoter. May act concomitantly with NR4A2 in regulating the expression of delayed-early genes during liver regeneration. Plays a role in the vascular response to injury. In the cytosol, upon its detection of both bacterial lipopolysaccharide (LPS) and NBRE-containing mitochondrial DNA released by GSDMD pores during pyroptosis, it promotes non-canonical NLRP3 inflammasome activation by stimulating association of NLRP3 and NEK7. In Homo sapiens (Human), this protein is Nuclear receptor subfamily 4immunitygroup A member 1 (NR4A1).